The primary structure comprises 933 residues: Phosphoenolpyruvate carboxylase (933 aa).

Residues H164 and K595 contribute to the active site.

This sequence belongs to the PEPCase type 1 family. It depends on Mg(2+) as a cofactor.

It carries out the reaction oxaloacetate + phosphate = phosphoenolpyruvate + hydrogencarbonate. In terms of biological role, forms oxaloacetate, a four-carbon dicarboxylic acid source for the tricarboxylic acid cycle. The polypeptide is Phosphoenolpyruvate carboxylase (Rhodopseudomonas palustris (strain HaA2)).